The sequence spans 99 residues: Aspartyl/glutamyl-tRNA(Asn/Gln) amidotransferase subunit C (99 aa).

The protein belongs to the GatC family. As to quaternary structure, heterotrimer of A, B and C subunits.

It catalyses the reaction L-glutamyl-tRNA(Gln) + L-glutamine + ATP + H2O = L-glutaminyl-tRNA(Gln) + L-glutamate + ADP + phosphate + H(+). The catalysed reaction is L-aspartyl-tRNA(Asn) + L-glutamine + ATP + H2O = L-asparaginyl-tRNA(Asn) + L-glutamate + ADP + phosphate + 2 H(+). In terms of biological role, allows the formation of correctly charged Asn-tRNA(Asn) or Gln-tRNA(Gln) through the transamidation of misacylated Asp-tRNA(Asn) or Glu-tRNA(Gln) in organisms which lack either or both of asparaginyl-tRNA or glutaminyl-tRNA synthetases. The reaction takes place in the presence of glutamine and ATP through an activated phospho-Asp-tRNA(Asn) or phospho-Glu-tRNA(Gln). This Mycolicibacterium smegmatis (strain ATCC 700084 / mc(2)155) (Mycobacterium smegmatis) protein is Aspartyl/glutamyl-tRNA(Asn/Gln) amidotransferase subunit C.